A 210-amino-acid polypeptide reads, in one-letter code: ATP-dependent Clp protease proteolytic subunit (210 aa).

The Nucleophile role is filled by serine 107. Residue histidine 132 is part of the active site.

Belongs to the peptidase S14 family. In terms of assembly, fourteen ClpP subunits assemble into 2 heptameric rings which stack back to back to give a disk-like structure with a central cavity, resembling the structure of eukaryotic proteasomes.

It localises to the cytoplasm. The enzyme catalyses Hydrolysis of proteins to small peptides in the presence of ATP and magnesium. alpha-casein is the usual test substrate. In the absence of ATP, only oligopeptides shorter than five residues are hydrolyzed (such as succinyl-Leu-Tyr-|-NHMec, and Leu-Tyr-Leu-|-Tyr-Trp, in which cleavage of the -Tyr-|-Leu- and -Tyr-|-Trp bonds also occurs).. Cleaves peptides in various proteins in a process that requires ATP hydrolysis. Has a chymotrypsin-like activity. Plays a major role in the degradation of misfolded proteins. This Zymomonas mobilis subsp. mobilis (strain ATCC 31821 / ZM4 / CP4) protein is ATP-dependent Clp protease proteolytic subunit.